A 362-amino-acid chain; its full sequence is tRNA-specific 2-thiouridylase MnmA (362 aa).

Residues 13 to 20 (GLSGGVDS) and methionine 39 each bind ATP. Positions 99 to 101 (NPD) are interaction with target base in tRNA. The active-site Nucleophile is cysteine 104. Cysteine 104 and cysteine 200 are joined by a disulfide. An ATP-binding site is contributed by glycine 128. The interval 150 to 152 (KDQ) is interaction with tRNA. Cysteine 200 functions as the Cysteine persulfide intermediate in the catalytic mechanism.

It belongs to the MnmA/TRMU family.

It is found in the cytoplasm. It carries out the reaction S-sulfanyl-L-cysteinyl-[protein] + uridine(34) in tRNA + AH2 + ATP = 2-thiouridine(34) in tRNA + L-cysteinyl-[protein] + A + AMP + diphosphate + H(+). Its function is as follows. Catalyzes the 2-thiolation of uridine at the wobble position (U34) of tRNA, leading to the formation of s(2)U34. In Coxiella burnetii (strain RSA 493 / Nine Mile phase I), this protein is tRNA-specific 2-thiouridylase MnmA.